Consider the following 226-residue polypeptide: 7-cyano-7-deazaguanine synthase (226 aa).

ATP is bound at residue 8-18 (ISGGLDSTTCL). Zn(2+)-binding residues include Cys188, Cys198, Cys201, and Cys204.

Belongs to the QueC family. Requires Zn(2+) as cofactor.

It carries out the reaction 7-carboxy-7-deazaguanine + NH4(+) + ATP = 7-cyano-7-deazaguanine + ADP + phosphate + H2O + H(+). Its pathway is purine metabolism; 7-cyano-7-deazaguanine biosynthesis. In terms of biological role, catalyzes the ATP-dependent conversion of 7-carboxy-7-deazaguanine (CDG) to 7-cyano-7-deazaguanine (preQ(0)). This Coxiella burnetii (strain Dugway 5J108-111) protein is 7-cyano-7-deazaguanine synthase.